Reading from the N-terminus, the 317-residue chain is Phosphopantothenate--cysteine ligase 1 (317 aa).

It belongs to the PPC synthetase family. In terms of assembly, homodimer.

The catalysed reaction is (R)-4'-phosphopantothenate + L-cysteine + ATP = N-[(R)-4-phosphopantothenoyl]-L-cysteine + AMP + diphosphate + H(+). Its pathway is cofactor biosynthesis; coenzyme A biosynthesis; CoA from (R)-pantothenate: step 2/5. Its function is as follows. Catalyzes the first step in the biosynthesis of coenzyme A from vitamin B5/pantothenate, where cysteine is conjugated to 4'-phosphopantothenate to form 4-phosphopantothenoylcysteine. The catalytic activity is not CTP- but ATP-dependent. This is Phosphopantothenate--cysteine ligase 1 (PPCS1) from Arabidopsis thaliana (Mouse-ear cress).